The sequence spans 206 residues: Ribosomal RNA large subunit methyltransferase E (206 aa).

S-adenosyl-L-methionine contacts are provided by G55, W57, D75, D91, and D116. Catalysis depends on K156, which acts as the Proton acceptor.

The protein belongs to the class I-like SAM-binding methyltransferase superfamily. RNA methyltransferase RlmE family.

Its subcellular location is the cytoplasm. It catalyses the reaction uridine(2552) in 23S rRNA + S-adenosyl-L-methionine = 2'-O-methyluridine(2552) in 23S rRNA + S-adenosyl-L-homocysteine + H(+). In terms of biological role, specifically methylates the uridine in position 2552 of 23S rRNA at the 2'-O position of the ribose in the fully assembled 50S ribosomal subunit. The chain is Ribosomal RNA large subunit methyltransferase E from Blochmanniella floridana.